An 821-amino-acid chain; its full sequence is High affinity potassium transporter (821 aa).

The segment covering 1 to 10 has biased composition (polar residues); sequence MSDSQSNKQN. The interval 1–47 is disordered; the sequence is MSDSQSNKQNQGEDDNNVSSSIESNENYPFRLNDEESEPQSSTTESM. Residues 1–57 are Cytoplasmic-facing; it reads MSDSQSNKQNQGEDDNNVSSSIESNENYPFRLNDEESEPQSSTTESMLKAKKQSWRQ. A compositionally biased stretch (low complexity) spans 17-27; sequence NVSSSIESNEN. A helical membrane pass occupies residues 58-78; sequence VLMLGFSSLGAIYGDIGTSPL. Residues 79–101 lie on the Extracellular side of the membrane; that stretch reads YVLNSIKYPNSSPTEEDIYGAIS. Residues 102–122 form a helical membrane-spanning segment; the sequence is IIFYLFTFIVIFKYILIVLFL. Residues 123–190 are Cytoplasmic-facing; the sequence is GTNDGEGGQV…KASGFKTNPK (68 aa). Residues 191–211 form a helical membrane-spanning segment; that stretch reads LIKFISKFILFGCFFGCSLVM. The Extracellular segment spans residues 212 to 238; that stretch reads SDGLLTPTTSVLSAIAGIQIANPSFND. Residues 239 to 259 form a helical membrane-spanning segment; the sequence is VLAVSEVVLIVLFLIQQFGSN. Lysine 260 is a topological domain (cytoplasmic). Residues 261–281 traverse the membrane as a helical segment; that stretch reads ISFTFAPIIFLWLIGLIISGI. Residues 282–306 lie on the Extracellular side of the membrane; it reads YNIVKFHPAVFKSLSPYYAIQLLKH. A helical membrane pass occupies residues 307–327; sequence SGIDVFSGAMLSITGTEAMFA. The Cytoplasmic segment spans residues 328-340; it reads DVGHFGRLPIQLT. Residues 341-361 form a helical membrane-spanning segment; sequence LTLFVYPALIICYLGQGAYII. Topologically, residues 362-386 are extracellular; that stretch reads KHPEALSNPFFYSIPGGLNSWIYWV. A helical membrane pass occupies residues 387-407; it reads MFVLATLSTIIASQALILGVF. Over 408–434 the chain is Cytoplasmic; it reads SITSQLINLDCFPNFKIIHVSKKYAGK. Residues 435–455 form a helical membrane-spanning segment; the sequence is VYIPAINWLLMIGVCATTAGF. Over 456 to 463 the chain is Extracellular; it reads KNSNNVTA. N-linked (GlcNAc...) asparagine glycosylation is present at asparagine 460. The helical transmembrane segment at 464-484 threads the bilayer; that stretch reads AYGLGITLDFLVTSSLIMVCM. At 485-491 the chain is on the cytoplasmic side; the sequence is TYVYNWN. Residues 492–512 form a helical membrane-spanning segment; sequence ILIPITYALIFLPLEVIMVIS. Residues 513–516 lie on the Extracellular side of the membrane; it reads NLKK. Residues 517–537 traverse the membrane as a helical segment; it reads ITHGAWFPLMMSGIFMMFLSF. At 538-821 the chain is on the cytoplasmic side; it reads WRWARSRKVN…KMFLGGVVRI (284 aa).

The protein belongs to the HAK/KUP transporter (TC 2.A.72) family.

The protein resides in the membrane. Major high-affinity potassium uptake protein. The chain is High affinity potassium transporter (HAK1) from Schwanniomyces occidentalis (Yeast).